The sequence spans 628 residues: Chaperone protein HtpG (628 aa).

Residues 1-337 are a; substrate-binding; it reads MSEKKYTFET…SADLPLNVSR (337 aa). The interval 338-554 is b; sequence EILQHNKVID…DYGMSLHMQK (217 aa). The segment at 555 to 628 is c; sequence MMEEAGQSFM…FVKLVNKYIR (74 aa).

This sequence belongs to the heat shock protein 90 family. In terms of assembly, homodimer.

It localises to the cytoplasm. Its function is as follows. Molecular chaperone. Has ATPase activity. The sequence is that of Chaperone protein HtpG from Francisella tularensis subsp. tularensis (strain WY96-3418).